The chain runs to 213 residues: Pyridoxine/pyridoxamine 5'-phosphate oxidase (213 aa).

FMN contacts are provided by residues 60–65 (RMVLMK), 75–76 (YS), lysine 82, and glutamine 104. Lysine 65 serves as a coordination point for substrate. Tyrosine 122 and arginine 126 together coordinate substrate. FMN-binding positions include 139–140 (QS) and tryptophan 184. Residue 190 to 192 (RLH) coordinates substrate. Arginine 194 is an FMN binding site.

The protein belongs to the pyridoxamine 5'-phosphate oxidase family. In terms of assembly, homodimer. FMN serves as cofactor.

The enzyme catalyses pyridoxamine 5'-phosphate + O2 + H2O = pyridoxal 5'-phosphate + H2O2 + NH4(+). It catalyses the reaction pyridoxine 5'-phosphate + O2 = pyridoxal 5'-phosphate + H2O2. The protein operates within cofactor metabolism; pyridoxal 5'-phosphate salvage; pyridoxal 5'-phosphate from pyridoxamine 5'-phosphate: step 1/1. It participates in cofactor metabolism; pyridoxal 5'-phosphate salvage; pyridoxal 5'-phosphate from pyridoxine 5'-phosphate: step 1/1. Catalyzes the oxidation of either pyridoxine 5'-phosphate (PNP) or pyridoxamine 5'-phosphate (PMP) into pyridoxal 5'-phosphate (PLP). The polypeptide is Pyridoxine/pyridoxamine 5'-phosphate oxidase (Nitrobacter hamburgensis (strain DSM 10229 / NCIMB 13809 / X14)).